Consider the following 387-residue polypeptide: Chorismate synthase (387 aa).

NADP(+) contacts are provided by arginine 40 and arginine 46. FMN is bound by residues 129–131, 250–251, glycine 295, 310–314, and arginine 336; these read RSS, QA, and KPIPT.

Belongs to the chorismate synthase family. In terms of assembly, homotetramer. Requires FMNH2 as cofactor.

It catalyses the reaction 5-O-(1-carboxyvinyl)-3-phosphoshikimate = chorismate + phosphate. The protein operates within metabolic intermediate biosynthesis; chorismate biosynthesis; chorismate from D-erythrose 4-phosphate and phosphoenolpyruvate: step 7/7. Functionally, catalyzes the anti-1,4-elimination of the C-3 phosphate and the C-6 proR hydrogen from 5-enolpyruvylshikimate-3-phosphate (EPSP) to yield chorismate, which is the branch point compound that serves as the starting substrate for the three terminal pathways of aromatic amino acid biosynthesis. This reaction introduces a second double bond into the aromatic ring system. The polypeptide is Chorismate synthase (Desulforamulus reducens (strain ATCC BAA-1160 / DSM 100696 / MI-1) (Desulfotomaculum reducens)).